The chain runs to 139 residues: Trafficking protein particle complex subunit 2-like protein (139 aa).

Belongs to the TRAPP small subunits family. Sedlin subfamily. Component of the multisubunit TRAPP (transport protein particle) complex, which includes at least TRAPPC2, TRAPPC2L, TRAPPC3, TRAPPC3L, TRAPPC4, TRAPPC5, TRAPPC8, TRAPPC9, TRAPPC10, TRAPPC11 and TRAPPC12. Interacts with the heterodimer TRAPPC3-TRAPPC6A.

It is found in the cytoplasm. The protein localises to the perinuclear region. Its subcellular location is the endoplasmic reticulum. The protein resides in the golgi apparatus. In terms of biological role, may play a role in vesicular transport from endoplasmic reticulum to Golgi. The chain is Trafficking protein particle complex subunit 2-like protein (Trappc2l) from Rattus norvegicus (Rat).